The sequence spans 340 residues: 4-hydroxy-3-methylbut-2-enyl diphosphate reductase (340 aa).

C19 is a binding site for [4Fe-4S] cluster. The (2E)-4-hydroxy-3-methylbut-2-enyl diphosphate site is built by H50 and H90. Residues H50 and H90 each coordinate dimethylallyl diphosphate. The isopentenyl diphosphate site is built by H50 and H90. Residue C112 coordinates [4Fe-4S] cluster. H141 is a (2E)-4-hydroxy-3-methylbut-2-enyl diphosphate binding site. H141 contributes to the dimethylallyl diphosphate binding site. Residue H141 coordinates isopentenyl diphosphate. E143 acts as the Proton donor in catalysis. T190 contributes to the (2E)-4-hydroxy-3-methylbut-2-enyl diphosphate binding site. Residue C220 coordinates [4Fe-4S] cluster. Residues S248, S249, N250, and S292 each contribute to the (2E)-4-hydroxy-3-methylbut-2-enyl diphosphate site. The dimethylallyl diphosphate site is built by S248, S249, N250, and S292. Isopentenyl diphosphate contacts are provided by S248, S249, N250, and S292.

This sequence belongs to the IspH family. [4Fe-4S] cluster serves as cofactor.

It carries out the reaction isopentenyl diphosphate + 2 oxidized [2Fe-2S]-[ferredoxin] + H2O = (2E)-4-hydroxy-3-methylbut-2-enyl diphosphate + 2 reduced [2Fe-2S]-[ferredoxin] + 2 H(+). The enzyme catalyses dimethylallyl diphosphate + 2 oxidized [2Fe-2S]-[ferredoxin] + H2O = (2E)-4-hydroxy-3-methylbut-2-enyl diphosphate + 2 reduced [2Fe-2S]-[ferredoxin] + 2 H(+). It functions in the pathway isoprenoid biosynthesis; dimethylallyl diphosphate biosynthesis; dimethylallyl diphosphate from (2E)-4-hydroxy-3-methylbutenyl diphosphate: step 1/1. Its pathway is isoprenoid biosynthesis; isopentenyl diphosphate biosynthesis via DXP pathway; isopentenyl diphosphate from 1-deoxy-D-xylulose 5-phosphate: step 6/6. Catalyzes the conversion of 1-hydroxy-2-methyl-2-(E)-butenyl 4-diphosphate (HMBPP) into a mixture of isopentenyl diphosphate (IPP) and dimethylallyl diphosphate (DMAPP). Acts in the terminal step of the DOXP/MEP pathway for isoprenoid precursor biosynthesis. This Thermus thermophilus (strain ATCC BAA-163 / DSM 7039 / HB27) protein is 4-hydroxy-3-methylbut-2-enyl diphosphate reductase.